A 446-amino-acid chain; its full sequence is Exodeoxyribonuclease 7 large subunit (446 aa).

This sequence belongs to the XseA family. As to quaternary structure, heterooligomer composed of large and small subunits.

The protein localises to the cytoplasm. The catalysed reaction is Exonucleolytic cleavage in either 5'- to 3'- or 3'- to 5'-direction to yield nucleoside 5'-phosphates.. Bidirectionally degrades single-stranded DNA into large acid-insoluble oligonucleotides, which are then degraded further into small acid-soluble oligonucleotides. The polypeptide is Exodeoxyribonuclease 7 large subunit (Vibrio cholerae serotype O1 (strain ATCC 39541 / Classical Ogawa 395 / O395)).